The primary structure comprises 155 residues: Small ribosomal subunit protein uS7 (155 aa).

This sequence belongs to the universal ribosomal protein uS7 family. Part of the 30S ribosomal subunit. Contacts proteins S9 and S11.

In terms of biological role, one of the primary rRNA binding proteins, it binds directly to 16S rRNA where it nucleates assembly of the head domain of the 30S subunit. Is located at the subunit interface close to the decoding center, probably blocks exit of the E-site tRNA. The protein is Small ribosomal subunit protein uS7 of Mycoplasma genitalium (strain ATCC 33530 / DSM 19775 / NCTC 10195 / G37) (Mycoplasmoides genitalium).